A 775-amino-acid chain; its full sequence is E3 ubiquitin-protein ligase UHRF1 (775 aa).

A Ubiquitin-like domain is found at 1–77; that stretch reads MWIQVRTMDG…IVQLLVRQIP (77 aa). A disordered region spans residues 81–128; it reads PTKDKECGISDADSGCGSGQGESDKNSSCGEGATDVDGQPAGINSENV. Tudor-like regions lie at residues 131-207 and 214-283; these read SLYK…LRAR and DLKV…IEEP. The interval 293–301 is linker; sequence PQKRQNGPE. The PHD-type zinc finger occupies 299–366; sequence GPECKHCKDN…DWYCPDCRND (68 aa). Histone H3R2me0 binding stretches follow at residues 333–337 and 353–355; these read CDECD and PQD. A YDG domain is found at 419–582; sequence GPIPGVPVGT…FLVWRYLLRR (164 aa). Residues 445–446 form a required to promote base flipping region; that stretch reads HV. DNA-binding positions include 463–464 and Asp469; that span reads AG. Required for formation of a 5-methylcytosine-binding pocket stretches follow at residues 466–469 and 478–481; these read YEDD and YTGS. Residues 616–628 are compositionally biased toward basic and acidic residues; sequence ASKEREKENKTED. Residues 616–655 form a disordered region; the sequence is ASKEREKENKTEDELSESPSKGKRKRNSAGSGLSDAKSTP. The segment at 706 to 745 adopts an RING-type zinc-finger fold; the sequence is CICCQEVVYEPITTECHHNICKGCLDRSFKALVHNCPACR.

The protein localises to the nucleus. The enzyme catalyses S-ubiquitinyl-[E2 ubiquitin-conjugating enzyme]-L-cysteine + [acceptor protein]-L-lysine = [E2 ubiquitin-conjugating enzyme]-L-cysteine + N(6)-ubiquitinyl-[acceptor protein]-L-lysine.. The protein operates within protein modification; protein ubiquitination. Its function is as follows. Multidomain protein that acts as a key epigenetic regulator by bridging DNA methylation and chromatin modification. Specifically recognizes and binds hemimethylated DNA at replication forks via its YDG domain and recruits dnmt1 methyltransferase to ensure faithful propagation of the DNA methylation patterns through DNA replication. In addition to its role in maintenance of DNA methylation, also plays a key role in chromatin modification: through its tudor-like regions and PHD-type zinc fingers, specifically recognizes and binds histone H3 trimethylated at 'Lys-9' (H3K9me3) and unmethylated at 'Arg-2' (H3R2me0), respectively, and recruits chromatin proteins. Enriched in pericentric heterochromatin where it recruits different chromatin modifiers required for this chromatin replication. Also localizes to euchromatic regions where it negatively regulates transcription possibly by impacting DNA methylation and histone modifications. Has E3 ubiquitin-protein ligase activity by mediating the ubiquitination of target proteins. However, it is still unclear how E3 ubiquitin-protein ligase activity is related to its role in chromatin in vivo. This is E3 ubiquitin-protein ligase UHRF1 (uhrf1) from Xenopus tropicalis (Western clawed frog).